We begin with the raw amino-acid sequence, 153 residues long: Small ribosomal subunit protein uS13 (153 aa).

The protein belongs to the universal ribosomal protein uS13 family. Part of the 30S ribosomal subunit. Forms a loose heterodimer with protein S19. Forms two bridges to the 50S subunit in the 70S ribosome.

Its function is as follows. Located at the top of the head of the 30S subunit, it contacts several helices of the 16S rRNA. In the 70S ribosome it contacts the 23S rRNA (bridge B1a) and protein L5 of the 50S subunit (bridge B1b), connecting the 2 subunits; these bridges are implicated in subunit movement. In Pyrobaculum islandicum (strain DSM 4184 / JCM 9189 / GEO3), this protein is Small ribosomal subunit protein uS13.